The chain runs to 328 residues: Oligopeptide transport ATP-binding protein AppD (328 aa).

An ABC transporter domain is found at 5 to 256; sequence LEVNNLKTYF…PLHPYTEGLL (252 aa). 41 to 48 serves as a coordination point for ATP; that stretch reads GESGSGKS.

It belongs to the ABC transporter superfamily.

Its subcellular location is the cell membrane. This protein is a component of an oligopeptide permease, a binding protein-dependent transport system. This APP system can completely substitute for the OPP system in both sporulation and genetic competence, though, unlike OPP, is incapable of transporting tripeptides. Probably responsible for energy coupling to the transport system. The protein is Oligopeptide transport ATP-binding protein AppD (appD) of Bacillus subtilis (strain 168).